A 237-amino-acid polypeptide reads, in one-letter code: ATP-dependent dethiobiotin synthetase BioD (237 aa).

An ATP-binding site is contributed by 12-17 (DAGKTL). Position 16 (threonine 16) interacts with Mg(2+). Lysine 37 is a catalytic residue. A substrate-binding site is contributed by serine 41. ATP-binding positions include aspartate 54, 116–119 (EGAG), and 213–215 (PRL). Aspartate 54 and glutamate 116 together coordinate Mg(2+).

The protein belongs to the dethiobiotin synthetase family. Homodimer. Mg(2+) is required as a cofactor.

Its subcellular location is the cytoplasm. It catalyses the reaction (7R,8S)-7,8-diammoniononanoate + CO2 + ATP = (4R,5S)-dethiobiotin + ADP + phosphate + 3 H(+). The protein operates within cofactor biosynthesis; biotin biosynthesis; biotin from 7,8-diaminononanoate: step 1/2. Catalyzes a mechanistically unusual reaction, the ATP-dependent insertion of CO2 between the N7 and N8 nitrogen atoms of 7,8-diaminopelargonic acid (DAPA, also called 7,8-diammoniononanoate) to form a ureido ring. This Chromohalobacter salexigens (strain ATCC BAA-138 / DSM 3043 / CIP 106854 / NCIMB 13768 / 1H11) protein is ATP-dependent dethiobiotin synthetase BioD.